The following is a 90-amino-acid chain: Probable Fe(2+)-trafficking protein (90 aa).

It belongs to the Fe(2+)-trafficking protein family.

Could be a mediator in iron transactions between iron acquisition and iron-requiring processes, such as synthesis and/or repair of Fe-S clusters in biosynthetic enzymes. This Cupriavidus necator (strain ATCC 17699 / DSM 428 / KCTC 22496 / NCIMB 10442 / H16 / Stanier 337) (Ralstonia eutropha) protein is Probable Fe(2+)-trafficking protein.